Consider the following 2245-residue polypeptide: Myosin-J heavy chain (2245 aa).

Residues 25–77 (QEGAGVWIPDQELGWIGADVIEHSETSADQVLVRTEDDREVKIPLSKVFQKNP) form the Myosin N-terminal SH3-like domain. The Myosin motor domain occupies 81-821 (EGVDDLSFLS…QLASLEDMRL (741 aa)). Residue 174–181 (GESGAGKT) coordinates ATP. The disordered stretch occupies residues 646–672 (FTQSPGGHPQGNGGPTSSNTKGTSGSS). Low complexity predominate over residues 660-672 (PTSSNTKGTSGSS). The segment at 669 to 749 (SGSSSMKFLS…GFPTRRLLSE (81 aa)) is actin-binding. IQ domains lie at 824-851 (LDRSATVIQKRWKGYLYRKRYKQLRDAS), 872-901 (RTHSAILIQKVWRAHRDRVQYQKIRDASLQ), and 943-972 (KLRGIILIQARWRMKLAKRVYIQLRAEARS). Positions 973–1812 (LRTVQEQKNK…NYHMLEDRME (840 aa)) form a coiled coil. A disordered region spans residues 1504–1524 (KKQLTQLQQQHEQSSTQLLLA). Residues 1506 to 1523 (QLTQLQQQHEQSSTQLLL) are compositionally biased toward low complexity. One can recognise a Dilute domain in the interval 1969-2188 (IDFIDQLQQS…IASICPPNKS (220 aa)).

This sequence belongs to the TRAFAC class myosin-kinesin ATPase superfamily. Myosin family. As to quaternary structure, homodimer that associates with six light chains.

It is found in the contractile vacuole. Its function is as follows. Processive motor protein that can move over long distances along F-actin without disassociating; processiveness depends on high physiological Mg(2+) concentrations. Presents a high actin affinity in the presence of ADP, fast ATP hydrolysis, and a high steady-state ATPase activity in the presence of actin that is rate limited by ADP release. Physiological decrease of free Mg(2+) ions leads to an increased rate of ADP release and shortening of the fraction of time it spends in the strong acting binding states. This Dictyostelium discoideum (Social amoeba) protein is Myosin-J heavy chain (myoJ).